We begin with the raw amino-acid sequence, 259 residues long: Dihydroorotate dehydrogenase B (NAD(+)), electron transfer subunit (259 aa).

Residues 2–102 enclose the FAD-binding FR-type domain; it reads MQKQNMIVVN…LGPLGHGFPV (101 aa). FAD is bound by residues 53–56, 70–72, and 77–78; these read RPIS, LYR, and GT. [2Fe-2S] cluster contacts are provided by cysteine 221, cysteine 226, cysteine 229, and cysteine 246.

It belongs to the PyrK family. Heterotetramer of 2 PyrK and 2 PyrD type B subunits. The cofactor is [2Fe-2S] cluster. FAD serves as cofactor.

It functions in the pathway pyrimidine metabolism; UMP biosynthesis via de novo pathway; orotate from (S)-dihydroorotate (NAD(+) route): step 1/1. Responsible for channeling the electrons from the oxidation of dihydroorotate from the FMN redox center in the PyrD type B subunit to the ultimate electron acceptor NAD(+). The chain is Dihydroorotate dehydrogenase B (NAD(+)), electron transfer subunit from Bacillus cereus (strain ATCC 14579 / DSM 31 / CCUG 7414 / JCM 2152 / NBRC 15305 / NCIMB 9373 / NCTC 2599 / NRRL B-3711).